The sequence spans 124 residues: Small ribosomal subunit protein uS12 (124 aa).

Aspartate 89 carries the post-translational modification 3-methylthioaspartic acid.

It belongs to the universal ribosomal protein uS12 family. As to quaternary structure, part of the 30S ribosomal subunit. Contacts proteins S8 and S17. May interact with IF1 in the 30S initiation complex.

In terms of biological role, with S4 and S5 plays an important role in translational accuracy. Interacts with and stabilizes bases of the 16S rRNA that are involved in tRNA selection in the A site and with the mRNA backbone. Located at the interface of the 30S and 50S subunits, it traverses the body of the 30S subunit contacting proteins on the other side and probably holding the rRNA structure together. The combined cluster of proteins S8, S12 and S17 appears to hold together the shoulder and platform of the 30S subunit. The chain is Small ribosomal subunit protein uS12 from Buchnera aphidicola subsp. Cinara cedri (strain Cc).